The following is a 430-amino-acid chain: Adenylosuccinate synthetase (430 aa).

Residues 12 to 18 and 40 to 42 contribute to the GTP site; these read GDEGKGK and GHT. The active-site Proton acceptor is the D13. Positions 13 and 40 each coordinate Mg(2+). IMP contacts are provided by residues 13–16, 38–41, T128, R142, Q223, T238, and R302; these read DEGK and NAGH. H41 serves as the catalytic Proton donor. Position 298-304 (298-304) interacts with substrate; sequence TTTGRPR. GTP is bound by residues R304, 330–332, and 412–414; these read SID and SVG.

The protein belongs to the adenylosuccinate synthetase family. As to quaternary structure, homodimer. Requires Mg(2+) as cofactor.

It is found in the cytoplasm. It catalyses the reaction IMP + L-aspartate + GTP = N(6)-(1,2-dicarboxyethyl)-AMP + GDP + phosphate + 2 H(+). It functions in the pathway purine metabolism; AMP biosynthesis via de novo pathway; AMP from IMP: step 1/2. In terms of biological role, plays an important role in the de novo pathway of purine nucleotide biosynthesis. Catalyzes the first committed step in the biosynthesis of AMP from IMP. This Streptococcus pyogenes serotype M4 (strain MGAS10750) protein is Adenylosuccinate synthetase.